The chain runs to 96 residues: Putative septation protein SpoVG (96 aa).

The protein belongs to the SpoVG family.

Could be involved in septation. This is Putative septation protein SpoVG from Clostridium kluyveri (strain ATCC 8527 / DSM 555 / NBRC 12016 / NCIMB 10680 / K1).